Reading from the N-terminus, the 149-residue chain is Urease accessory protein UreE (149 aa).

Belongs to the UreE family.

Its subcellular location is the cytoplasm. Functionally, involved in urease metallocenter assembly. Binds nickel. Probably functions as a nickel donor during metallocenter assembly. The polypeptide is Urease accessory protein UreE (Prochlorococcus marinus (strain MIT 9215)).